The primary structure comprises 437 residues: Ribulose bisphosphate carboxylase-like protein (437 aa).

Lys-176 serves as the catalytic Proton acceptor. 3 residues coordinate Mg(2+): Lys-202, Asp-204, and Glu-205. Lys-202 carries the post-translational modification N6-carboxylysine. The active-site Proton acceptor is the His-293.

The protein belongs to the RuBisCO large chain family. Type IV subfamily. As to quaternary structure, homodimer. It depends on Mg(2+) as a cofactor.

In terms of biological role, may be involved in sulfur metabolism and oxidative stress response. Does not show RuBisCO activity. This is Ribulose bisphosphate carboxylase-like protein from Archaeoglobus fulgidus (strain ATCC 49558 / DSM 4304 / JCM 9628 / NBRC 100126 / VC-16).